The chain runs to 440 residues: Glutamyl-tRNA reductase (440 aa).

Substrate contacts are provided by residues 50 to 53 (TCNR), serine 109, 114 to 116 (EPQ), and glutamine 120. Catalysis depends on cysteine 51, which acts as the Nucleophile. 189–194 (GAGEMA) is a binding site for NADP(+).

This sequence belongs to the glutamyl-tRNA reductase family. As to quaternary structure, homodimer.

The enzyme catalyses (S)-4-amino-5-oxopentanoate + tRNA(Glu) + NADP(+) = L-glutamyl-tRNA(Glu) + NADPH + H(+). It functions in the pathway porphyrin-containing compound metabolism; protoporphyrin-IX biosynthesis; 5-aminolevulinate from L-glutamyl-tRNA(Glu): step 1/2. Its function is as follows. Catalyzes the NADPH-dependent reduction of glutamyl-tRNA(Glu) to glutamate 1-semialdehyde (GSA). This Nitratidesulfovibrio vulgaris (strain ATCC 29579 / DSM 644 / CCUG 34227 / NCIMB 8303 / VKM B-1760 / Hildenborough) (Desulfovibrio vulgaris) protein is Glutamyl-tRNA reductase.